A 93-amino-acid polypeptide reads, in one-letter code: MSEDVRLVAWVRGQVQGVGFRWFTRARALELGGMSGFALNLGDGRVQVVAEGPRERCEGLLEWLRGDDTPGRVDGVTEIWDTPRGGYEGFAIR.

The Acylphosphatase-like domain occupies 6–93 (RLVAWVRGQV…RGGYEGFAIR (88 aa)). Residues arginine 21 and asparagine 40 contribute to the active site.

Belongs to the acylphosphatase family.

It carries out the reaction an acyl phosphate + H2O = a carboxylate + phosphate + H(+). The sequence is that of Acylphosphatase (acyP) from Streptomyces coelicolor (strain ATCC BAA-471 / A3(2) / M145).